Reading from the N-terminus, the 212-residue chain is Thymidylate kinase (212 aa).

ATP is bound at residue 13-20 (GLEGAGKS).

The protein belongs to the thymidylate kinase family.

The enzyme catalyses dTMP + ATP = dTDP + ADP. Phosphorylation of dTMP to form dTDP in both de novo and salvage pathways of dTTP synthesis. This chain is Thymidylate kinase, found in Legionella pneumophila (strain Paris).